The sequence spans 1178 residues: Double-stranded RNA-specific adenosine deaminase (1178 aa).

The interval 1–40 (MSQGFRGPTGVFPHQTQSYLDPSHEHSKWRYPQPQGPESY) is disordered. Asymmetric dimethylarginine is present on residues arginine 30 and arginine 42. The 67-residue stretch at 135–201 (LSISQSPEQK…GKPPLWSLVP (67 aa)) folds into the Z-binding 1 domain. Residues 135–204 (LSISQSPEQK…PLWSLVPLSQ (70 aa)) form an interaction with Z-DNA region. The segment at 221 to 244 (EFPRGEPGLDSEDGDPASDLEGPS) is disordered. Over residues 229-238 (LDSEDGDPAS) the composition is skewed to acidic residues. A phosphoserine mark is found at serine 231 and serine 238. Residues 246–310 (PLDMAEIKEK…ATPPIWYLTD (65 aa)) enclose the Z-binding 2 domain. The segment at 316 to 383 (LQMKRSTHSA…SRHEARPGPM (68 aa)) is disordered. Positions 323 to 337 (HSAPAPTPTAVPEAT) are enriched in low complexity. Basic and acidic residues predominate over residues 360–379 (KRVENGQEPAIKHESRHEAR). Lysine 371 is covalently cross-linked (Glycyl lysine isopeptide (Lys-Gly) (interchain with G-Cter in SUMO); alternate). Lysine 371 is covalently cross-linked (Glycyl lysine isopeptide (Lys-Gly) (interchain with G-Cter in SUMO1); alternate). A Glycyl lysine isopeptide (Lys-Gly) (interchain with G-Cter in SUMO2); alternate cross-link involves residue lysine 371. The residue at position 434 (serine 434) is a Phosphoserine. Residues 456-524 (NPVSGLLEYA…AVKAMAILLR (69 aa)) form the DRBM 1 domain. Residues 527 to 550 (KAKDSGQPEDLSHCPMEEDSEKPA) show a composition bias toward basic and acidic residues. A disordered region spans residues 527 to 564 (KAKDSGQPEDLSHCPMEEDSEKPAEAQAPSSSATSLFS). The span at 554-564 (APSSSATSLFS) shows a compositional bias: polar residues. Residues serine 567, serine 582, and serine 589 each carry the phosphoserine modification. In terms of domain architecture, DRBM 2 spans 567-635 (SPVTTLLECM…AEEAMKALQE (69 aa)). The disordered stretch occupies residues 631–657 (KALQEEAASSADDQSGGANTDSLDESM). Positions 635–648 (EEAASSADDQSGGA) are enriched in low complexity. An N-terminal extension of DRBM 3 and constituent of a bi-partite nuclear localization signal region spans residues 665 to 674 (IGELVRYLNT). Positions 675-743 (NPVGGLLEYA…ADAALRVLIG (69 aa)) constitute a DRBM 3 domain. A C-terminal extension of DRBM 3 and constituent of a bi-partite nuclear localization signal region spans residues 744 to 750 (ESEKAEQ). Threonine 757 carries the phosphothreonine modification. Phosphoserine occurs at positions 763, 772, and 774. Lysine 824 is covalently cross-linked (Glycyl lysine isopeptide (Lys-Gly) (interchain with G-Cter in SUMO2)). One can recognise an A to I editase domain in the interval 835–1170 (SLGTGNRCVK…ISKPQEEKNF (336 aa)). Histidine 859 serves as a coordination point for Zn(2+). Glutamate 861 acts as the Proton donor in catalysis. Residues cysteine 915 and cysteine 985 each coordinate Zn(2+).

In terms of assembly, homodimer. Homodimerization is essential for its catalytic activity. Isoform 5 can form heterodimers with ADARB1/ADAR2. Isoform 1 and isoform 5 (via DRBM 3 domain) interact with TNPO1. Isoform 5 (via DRBM domains) interacts with XPO5. Isoform 1 and isoform 5 can interact with UPF1. Isoform 1 interacts with ILF2/NF45 and ILF3/NF90. Binding to ILF3/NF90 up-regulates ILF3-mediated gene expression. Isoform 1 and isoform 5 interact with EIF2AK2/PKR. Post-translationally, sumoylation reduces RNA-editing activity. As to expression, highest levels in brain and spleen. Lowest levels in liver.

The protein resides in the cytoplasm. It localises to the nucleus. Its subcellular location is the nucleolus. The catalysed reaction is adenosine in double-stranded RNA + H2O + H(+) = inosine in double-stranded RNA + NH4(+). Its function is as follows. Catalyzes the hydrolytic deamination of adenosine to inosine in double-stranded RNA (dsRNA) referred to as A-to-I RNA editing. This may affect gene expression and function in a number of ways that include mRNA translation by changing codons and hence the amino acid sequence of proteins since the translational machinery read the inosine as a guanosine; pre-mRNA splicing by altering splice site recognition sequences; RNA stability by changing sequences involved in nuclease recognition; genetic stability in the case of RNA virus genomes by changing sequences during viral RNA replication; and RNA structure-dependent activities such as microRNA production or targeting or protein-RNA interactions. Can edit both viral and cellular RNAs and can edit RNAs at multiple sites (hyper-editing) or at specific sites (site-specific editing). Its cellular RNA substrates include: bladder cancer-associated protein (BLCAP), neurotransmitter receptors for glutamate (GRIA2) and serotonin (HTR2C) and GABA receptor (GABRA3). Site-specific RNA editing of transcripts encoding these proteins results in amino acid substitutions which consequently alters their functional activities. Exhibits low-level editing at the GRIA2 Q/R site, but edits efficiently at the R/G site and HOTSPOT1. Does not affect polyomavirus replication but provides protection against virus-induced cytopathic effects. Essential for embryonic development and cell survival and plays a critical role in the maintenance of hematopoietic stem cells. The sequence is that of Double-stranded RNA-specific adenosine deaminase (Adar) from Mus musculus (Mouse).